A 434-amino-acid chain; its full sequence is ATP-dependent protease ATPase subunit HslU (434 aa).

Residues Ile-18, 60 to 65 (GVGKTE), Asp-247, Glu-312, and Arg-384 each bind ATP.

It belongs to the ClpX chaperone family. HslU subfamily. As to quaternary structure, a double ring-shaped homohexamer of HslV is capped on each side by a ring-shaped HslU homohexamer. The assembly of the HslU/HslV complex is dependent on binding of ATP.

The protein localises to the cytoplasm. Functionally, ATPase subunit of a proteasome-like degradation complex; this subunit has chaperone activity. The binding of ATP and its subsequent hydrolysis by HslU are essential for unfolding of protein substrates subsequently hydrolyzed by HslV. HslU recognizes the N-terminal part of its protein substrates and unfolds these before they are guided to HslV for hydrolysis. The polypeptide is ATP-dependent protease ATPase subunit HslU (Brucella melitensis biotype 1 (strain ATCC 23456 / CCUG 17765 / NCTC 10094 / 16M)).